The primary structure comprises 271 residues: Probable protein VP2 (271 aa).

Disordered stretches follow at residues 49 to 103, 124 to 146, and 203 to 271; these read GGPP…DAAA, QCSNRRSKTRARRTDGPPTPIDT, and LQQR…RVST. Positions 50-61 are enriched in pro residues; the sequence is GPPPPGGPPPGT. The segment covering 87–99 has biased composition (gly residues); that stretch reads GEGGAAGPPGAGG. The span at 207-216 shows a compositional bias: basic and acidic residues; sequence QQRESSESPK. The segment covering 217 to 238 has biased composition (basic residues); it reads KAHIQRKKGRKPLQKSRRRRRQ. The span at 239–259 shows a compositional bias: low complexity; sequence YSSSSDDSESSGSSSSSSNSS.

In terms of processing, phosphorylated at C-terminal serines.

The chain is Probable protein VP2 from Torque teno virus (isolate Human/Japan/SANBAN/1999) (TTV).